The following is a 285-amino-acid chain: Aldo-keto reductase (285 aa).

NADP(+) is bound at residue 165 to 175; it reads APLAGGILTGK.

The protein belongs to the aldo/keto reductase family. Aldo/keto reductase 2 subfamily.

The polypeptide is Aldo-keto reductase (Babesia bovis).